We begin with the raw amino-acid sequence, 355 residues long: Anthranilate phosphoribosyltransferase (355 aa).

5-phospho-alpha-D-ribose 1-diphosphate-binding positions include Gly-102, 105 to 106 (GD), Ser-110, 112 to 115 (NIST), 130 to 138 (KHGNRSVSS), and Ser-142. Gly-102 provides a ligand contact to anthranilate. Residue Ser-114 coordinates Mg(2+). An anthranilate-binding site is contributed by Asn-133. Arg-188 lines the anthranilate pocket. The Mg(2+) site is built by Asp-246 and Glu-247.

This sequence belongs to the anthranilate phosphoribosyltransferase family. Homodimer. Mg(2+) is required as a cofactor.

It catalyses the reaction N-(5-phospho-beta-D-ribosyl)anthranilate + diphosphate = 5-phospho-alpha-D-ribose 1-diphosphate + anthranilate. It participates in amino-acid biosynthesis; L-tryptophan biosynthesis; L-tryptophan from chorismate: step 2/5. Its function is as follows. Catalyzes the transfer of the phosphoribosyl group of 5-phosphorylribose-1-pyrophosphate (PRPP) to anthranilate to yield N-(5'-phosphoribosyl)-anthranilate (PRA). This chain is Anthranilate phosphoribosyltransferase, found in Pectobacterium atrosepticum (strain SCRI 1043 / ATCC BAA-672) (Erwinia carotovora subsp. atroseptica).